The primary structure comprises 151 residues: Putative pre-16S rRNA nuclease (151 aa).

The protein belongs to the YqgF nuclease family.

Its subcellular location is the cytoplasm. Could be a nuclease involved in processing of the 5'-end of pre-16S rRNA. This chain is Putative pre-16S rRNA nuclease, found in Neisseria meningitidis serogroup C (strain 053442).